A 379-amino-acid polypeptide reads, in one-letter code: Succinate--CoA ligase [ADP-forming] subunit beta (379 aa).

Residues Arg-9 to Arg-237 form the ATP-grasp domain. Residues Lys-45, Gly-52 to Gly-54, Ile-94, and Glu-99 each bind ATP. Positions 192 and 206 each coordinate Mg(2+). Substrate contacts are provided by residues Asn-257 and Gly-314 to Thr-316.

The protein belongs to the succinate/malate CoA ligase beta subunit family. Heterotetramer of two alpha and two beta subunits. Mg(2+) serves as cofactor.

It catalyses the reaction succinate + ATP + CoA = succinyl-CoA + ADP + phosphate. It carries out the reaction GTP + succinate + CoA = succinyl-CoA + GDP + phosphate. Its pathway is carbohydrate metabolism; tricarboxylic acid cycle; succinate from succinyl-CoA (ligase route): step 1/1. In terms of biological role, succinyl-CoA synthetase functions in the citric acid cycle (TCA), coupling the hydrolysis of succinyl-CoA to the synthesis of either ATP or GTP and thus represents the only step of substrate-level phosphorylation in the TCA. The beta subunit provides nucleotide specificity of the enzyme and binds the substrate succinate, while the binding sites for coenzyme A and phosphate are found in the alpha subunit. The chain is Succinate--CoA ligase [ADP-forming] subunit beta from Roseiflexus sp. (strain RS-1).